A 249-amino-acid polypeptide reads, in one-letter code: 5'-nucleotidase SurE (249 aa).

4 residues coordinate a divalent metal cation: Asp8, Asp9, Ser39, and Asn91.

Belongs to the SurE nucleotidase family. A divalent metal cation serves as cofactor.

The protein resides in the cytoplasm. It catalyses the reaction a ribonucleoside 5'-phosphate + H2O = a ribonucleoside + phosphate. In terms of biological role, nucleotidase that shows phosphatase activity on nucleoside 5'-monophosphates. This chain is 5'-nucleotidase SurE, found in Pseudomonas putida (strain ATCC 47054 / DSM 6125 / CFBP 8728 / NCIMB 11950 / KT2440).